Reading from the N-terminus, the 151-residue chain is LANGDEVDPDGHVLNSLIETVMRLQREFANLKYAFLTVHKARSFGSGSERLYVTNKEVKNFEPLGEICSQAGGRIPSPQLENQNKAFASVLERHNKAAYLVVGDSANFTNWAAGEPNEADGTCVKADTHGSWHSASCDENLLVVCEFYFIL.

The N-terminal stretch at 1 to 4 is a signal peptide; the sequence is LANG. A C-type lectin domain is found at 31–146; the sequence is LKYAFLTVHK…CDENLLVVCE (116 aa). 2 cysteine pairs are disulfide-bonded: Cys68–Cys145 and Cys123–Cys137. A glycan (N-linked (GlcNAc...) asparagine) is linked at Asn107.

The protein belongs to the alpha-type phospholipase A2 inhibitor family. In terms of assembly, oligomer. As to expression, expressed by the liver.

Its subcellular location is the secreted. Functionally, inhibits enzymatic, anticoagulant, edema formation, myotoxicity activities induced by snakes phospholipase A2. Is oligomeric, but it is probable that each of its subunits can bind and inactive a PLA2 molecule. This is Phospholipase A2 inhibitor BjussuMIP from Bothrops jararacussu (Jararacussu).